Here is a 142-residue protein sequence, read N- to C-terminus: Large ribosomal subunit protein uL11 (142 aa).

Belongs to the universal ribosomal protein uL11 family. Part of the ribosomal stalk of the 50S ribosomal subunit. Interacts with L10 and the large rRNA to form the base of the stalk. L10 forms an elongated spine to which L12 dimers bind in a sequential fashion forming a multimeric L10(L12)X complex. Post-translationally, one or more lysine residues are methylated.

Its function is as follows. Forms part of the ribosomal stalk which helps the ribosome interact with GTP-bound translation factors. In Rhodopseudomonas palustris (strain BisA53), this protein is Large ribosomal subunit protein uL11.